The following is a 58-amino-acid chain: ACLARGETCKDDCECCDCDNQCYCPFDWFGGKWHPVGCSCAHANKYFCDHKKEKCKKA.

5 disulfide bridges follow: C2–C16, C9–C22, C15–C40, C24–C38, and C48–C55.

As to expression, expressed by the venom gland.

The protein resides in the secreted. In terms of biological role, no toxic effects on mice at dose levels of 5 ug per mouse. May be toxic to insects. The protein is U8-ctenitoxin-Pk1a of Phoneutria keyserlingi (Brazilian wandering spider).